The following is a 789-amino-acid chain: MKSNQERSNECLPPKKREIPATSRPSEEKATALPSDNHCVEGVAWLPSTPGSRGHGGGRHGPAGTSGEHGLQGMGLHKALSAGLDYSPPSAPRSVPTANTLPTVYPPPQSGTPVSPVQYAHLSHTFQFIGSSQYSGPYAGFIPSQLISPPGNPVTSAVASAAGATTPSQRSQLEAYSTLLANMGSLSQAPGHKVEPPPQQHLGRAAGLVNPGSPPPTQQNQYIHISSSPQSSGRATSPPIPVHLHPHQTMIPHTLTLGPSSQVVVQYSDAGGHFVPRESTKKAESSRLQQAMQAKEVLNGEMEKSRRYGASSSVELSLGKTSSKSVPHPYESRHVVVHPSPADYSSRDTSGVRGSVMVLPNSSTPSADLETQQATHREASPSTLNDKSGLHLGKPGHRSYALSPHTVIQTTHSASEPLPVGLPATAFYAGAQPPVIGYLSSQQQAITYAGGLPQHLVIPGTQPLLIPVGSPDMDTPGAASAIVTSSPQFAAVPHTFVTTALPKSENFNPEALVTQAAYPAMVQAQIHLPVVQSVASPAAASPTLPPYFMKGSIIQLANGELKKVEDLKTEDFIQSAEISNDLKIDSSTVERIEDSHSPGVAVIQFAVGEHRAQVSVEVLVEYPFFVFGQGWSSCCPERTSQLFDLPCSKLSVGDVCISLTLKNLKNGSVKKGQPVDPASALLKHAKTDSLAGSRHRYAEQENGINQGSAQVLSENGELKFPEKIGLPAAPFLTKIEPSKPTATRKRRWSAPETRKLEKSEDEPPLTLPKPSLIPQEVKICIEGRSNVGK.

Positions Met-1–Ala-30 are enriched in basic and acidic residues. The segment at Met-1–Gly-73 is disordered. Residue Lys-16 forms a Glycyl lysine isopeptide (Lys-Gly) (interchain with G-Cter in SUMO) linkage. Phosphoserine is present on residues Ser-81 and Ser-87. 2 disordered regions span residues Gln-188–Ser-237 and Glu-296–His-397. Lys-193 participates in a covalent cross-link: Glycyl lysine isopeptide (Lys-Gly) (interchain with G-Cter in SUMO). At Ser-213 the chain carries Phosphoserine. Residue Thr-217 is modified to Phosphothreonine. Composition is skewed to polar residues over residues Gln-218–Ala-235, Ala-310–Ser-325, and Pro-360–Asp-386. Ser-228 is modified (phosphoserine). Residues Val-468–Ile-578 are self-association. The interaction with USP7 stretch occupies residues Leu-512–Lys-789. The tract at residues Thr-514–Pro-740 is RNA-binding. An AXH domain is found at Ser-536–Gly-667. Glycyl lysine isopeptide (Lys-Gly) (interchain with G-Cter in SUMO) cross-links involve residues Lys-583, Lys-670, and Lys-719. The disordered stretch occupies residues Glu-736 to Leu-772. Phosphoserine is present on Ser-749. The Nuclear localization signal signature appears at Pro-768 to Ser-771.

It belongs to the ATXN1 family. In terms of assembly, homooligomer. Interacts with CIC. Interacts with ANP32A, PQBP1, UBQLN4, ATXN1L and USP7. Directly interacts with RBPJ; this interaction is disrupted in the presence of Notch intracellular domain. Competes with ATXN1L for RBPJ-binding. Found in a complex with CIC and ATXN1L. Ubiquitinated by UBE3A, leading to its degradation by the proteasome. In terms of processing, phosphorylation at Ser-749 increases the pathogenicity of proteins with an expanded polyglutamine tract. Post-translationally, sumoylation is dependent on nuclear localization and phosphorylation at Ser-749. It is reduced in the presence of an expanded polyglutamine tract.

The protein localises to the cytoplasm. It localises to the nucleus. Functionally, chromatin-binding factor that repress Notch signaling in the absence of Notch intracellular domain by acting as a CBF1 corepressor. Binds to the HEY promoter and might assist, along with NCOR2, RBPJ-mediated repression. Binds RNA in vitro. May be involved in RNA metabolism. In concert with CIC and ATXN1L, involved brain development. The chain is Ataxin-1 (Atxn1) from Rattus norvegicus (Rat).